Here is a 241-residue protein sequence, read N- to C-terminus: Putative ABC transporter ATP-binding protein CA_C0773 (241 aa).

Positions 2-241 constitute an ABC transporter domain; it reads IKLEKVSFTY…REFLMECNII (240 aa). ATP is bound at residue 34 to 41; that stretch reads GPNGSGKS.

The protein belongs to the ABC transporter superfamily.

The protein resides in the cell membrane. Functionally, probably part of an ABC transporter complex. Responsible for energy coupling to the transport system. The polypeptide is Putative ABC transporter ATP-binding protein CA_C0773 (Clostridium acetobutylicum (strain ATCC 824 / DSM 792 / JCM 1419 / IAM 19013 / LMG 5710 / NBRC 13948 / NRRL B-527 / VKM B-1787 / 2291 / W)).